We begin with the raw amino-acid sequence, 273 residues long: GATA-type zinc finger protein 1 (273 aa).

Disordered regions lie at residues 99 to 143 (RDSK…ERVD) and 172 to 201 (SSRS…AGSE). The segment at 208–232 (CASCRTQRTPLWRDAEDGTPLCNAC) adopts a GATA-type zinc-finger fold.

It localises to the nucleus. Transcriptional regulator that plays a key role in germ cell development. Determines the oogenic fate by activating key genes for the oogenic program and meiotic prophase entry. Acts downstream of bone morphogenetic protein (BMP) by regulating expression of genes required for the oogenic programs, which are repressed by Polycomb activities in sexually uncommitted germ cells. Regulates expression of STRA8, a central downstream effector for the meiotic program. Acts independently of retinoic acid (RA). In males, not required for germ-cell sex determination, but required to allow the spermatogonia to efficiently accomplish the meiotic prophase. The chain is GATA-type zinc finger protein 1 from Homo sapiens (Human).